The sequence spans 142 residues: MGSEALAYALRLLARKGYSRAALRAKLAARFGEAEAEAALGRLEAMGYLDDRAYARAFVETRARRYGPRKLRALLLARGVPEEVVEEVLPEARVEEALAVLRRYRHREDKARAVRFLEGRGFPLGVALEAWRLAQEEGEGYK.

The protein belongs to the RecX family.

It is found in the cytoplasm. Modulates RecA activity. This is Regulatory protein RecX from Thermus thermophilus (strain ATCC BAA-163 / DSM 7039 / HB27).